The primary structure comprises 204 residues: CASP-like protein 2A1 (204 aa).

The segment covering 1–11 has biased composition (basic and acidic residues); that stretch reads MEKSNDHDKAS. The segment at 1 to 25 is disordered; the sequence is MEKSNDHDKASHGGSGGGATEKWEE. Topologically, residues 1–32 are cytoplasmic; sequence MEKSNDHDKASHGGSGGGATEKWEETSPGIRT. A helical transmembrane segment spans residues 33–53; the sequence is AETMLRLAPVGLCVAALVVML. Residues 54 to 74 are Extracellular-facing; the sequence is KDSETNEFGSISYSNLTAFRY. The N-linked (GlcNAc...) asparagine glycan is linked to N68. Residues 75–95 form a helical membrane-spanning segment; it reads LVHANGICAGYSLLSAAIAAM. The Cytoplasmic segment spans residues 96–113; it reads PRSSSTMPRVWTFFCLDQ. Residues 114-134 form a helical membrane-spanning segment; it reads LLTYLVLAAGAVSAEVLYLAY. Residues 135–155 lie on the Extracellular side of the membrane; sequence NGDSAITWSDACSSYGGFCHR. The chain crosses the membrane as a helical span at residues 156-176; the sequence is ATASVIITFFVVCFYILLSLI. Over 177 to 204 the chain is Cytoplasmic; sequence SSYKLFTRFDPPSIVDSDKTLEVAVFGS.

Belongs to the Casparian strip membrane proteins (CASP) family. Homodimer and heterodimers.

It localises to the cell membrane. The polypeptide is CASP-like protein 2A1 (Arabidopsis lyrata subsp. lyrata (Lyre-leaved rock-cress)).